The primary structure comprises 551 residues: Cytochrome P450 monooxygenase sdnQ (551 aa).

The interval 1-23 (MDDPSIASGFQQGTGRTTGANGT) is disordered. Positions 8–23 (SGFQQGTGRTTGANGT) are enriched in polar residues. N21 is a glycosylation site (N-linked (GlcNAc...) asparagine). Residues 41–57 (CIGTSLLVALLTTIIIY) traverse the membrane as a helical segment. C491 contributes to the heme binding site.

This sequence belongs to the cytochrome P450 family. It depends on heme as a cofactor.

The protein localises to the membrane. It participates in antibiotic biosynthesis. In terms of biological role, cytochrome P450 monooxygenase; part of the gene cluster that mediates the biosynthesis of sordarin and hypoxysordarin, glycoside antibiotics with a unique tetracyclic diterpene aglycone structure. First, the geranylgeranyl diphosphate synthase sdnC constructs GGDP from farnesyl diphosphate and isopentenyl diphosphate. The diterpene cyclase sdnA then catalyzes the cyclization of GGDP to afford cycloaraneosene. Cycloaraneosene is then hydroxylated four times by the putative cytochrome P450 monooxygenases sdnB, sdnE, sdnF and sdnH to give a hydroxylated cycloaraneosene derivative such as cycloaraneosene-8,9,13,19-tetraol. Although the order of the hydroxylations is unclear, at least C8, C9 and C13 of the cycloaraneosene skeleton are hydroxylated before the sordaricin formation. Dehydration of the 13-hydroxy group of the hydroxylated cycloaraneosene derivative might be catalyzed by an unassigned hypothetical protein such as sdnG and sdnP to construct the cyclopentadiene moiety. The FAD-dependent oxidoreductase sdnN is proposed to catalyze the oxidation at C9 of the hydroxylated cycloaraneosene derivative and also catalyze the Baeyer-Villiger oxidation to give the lactone intermediate. The presumed lactone intermediate would be hydrolyzed to give an acrolein moiety and a carboxylate moiety. Then, [4+2]cycloaddition would occur between the acrolein moiety and the cyclopentadiene moiety to give sordaricin. SdnN might also be involved in the [4+2]cycloaddition after the hypothesized oxidation to accommodate the oxidized product and prompt the [4+2]cycloaddition. GDP-6-deoxy-D-altrose may be biosynthesized from GDP-D-mannose by the putative GDP-mannose-4,6-dehydratase sdnI and the short-chain dehydrogenase sdnK. The glycosyltransferase sdnJ catalyzes the attachment of 6-deoxy-D-altrose onto the 19-hydroxy group of sordaricin to give 4'-O-demethylsordarin. The methyltransferase sdnD would complete the biosynthesis of sordarin. Sordarin can be further modified into hypoxysordarin. The unique acyl chain at the 3'-hydroxy group of hypoxysordarin would be constructed by an iterative type I PKS sdnO and the trans-acting polyketide methyltransferase sdnL. SdnL would be responsible for the introduction of an alpha-methyl group of the polyketide chain. Alternatively, the beta-lactamase-like protein sdnR might be responsible for the cleavage and transfer of the polyketide chain from the PKS sdnO to sordarin. Two putative cytochrome P450 monooxygenases, sdnQ and sdnT, might catalyze the epoxidations of the polyketide chain to complete the biosynthesis of hypoxysordarin. Transcriptional regulators sdnM and sdnS are presumably encoded for the transcriptional regulation of the expression of the sdn gene cluster. The sequence is that of Cytochrome P450 monooxygenase sdnQ from Sordaria araneosa (Pleurage araneosa).